A 94-amino-acid polypeptide reads, in one-letter code: Co-chaperonin GroES (94 aa).

The protein belongs to the GroES chaperonin family. In terms of assembly, heptamer of 7 subunits arranged in a ring. Interacts with the chaperonin GroEL.

Its subcellular location is the cytoplasm. In terms of biological role, together with the chaperonin GroEL, plays an essential role in assisting protein folding. The GroEL-GroES system forms a nano-cage that allows encapsulation of the non-native substrate proteins and provides a physical environment optimized to promote and accelerate protein folding. GroES binds to the apical surface of the GroEL ring, thereby capping the opening of the GroEL channel. The chain is Co-chaperonin GroES from Lactobacillus delbrueckii subsp. bulgaricus (strain ATCC BAA-365 / Lb-18).